The sequence spans 316 residues: Acetaldehyde dehydrogenase (316 aa).

An NAD(+)-binding site is contributed by 11–14; the sequence is SGNI. The active-site Acyl-thioester intermediate is Cys-131. NAD(+) is bound by residues 162 to 170 and Asn-289; that span reads SAGPGTRAN.

This sequence belongs to the acetaldehyde dehydrogenase family. In terms of assembly, interacts with MhpE.

The catalysed reaction is acetaldehyde + NAD(+) + CoA = acetyl-CoA + NADH + H(+). It participates in aromatic compound metabolism; 3-phenylpropanoate degradation. In terms of biological role, catalyzes the conversion of acetaldehyde to acetyl-CoA, using NAD(+) and coenzyme A. Is the final enzyme in the meta-cleavage pathway for the degradation of aromatic compounds. The sequence is that of Acetaldehyde dehydrogenase from Escherichia coli O7:K1 (strain IAI39 / ExPEC).